Here is a 76-residue protein sequence, read N- to C-terminus: Rhesus theta defensin-1/2 subunit B (76 aa).

The N-terminal stretch at 1-22 (MRTFALLTAMLLLVALHAQAEA) is a signal peptide. Positions 23–64 (RQARADEAAAQQQPGADDQGMAHSFTRPENAALPLSESARGL) are excised as a propeptide. Positions 25–54 (ARADEAAAQQQPGADDQGMAHSFTRPENAA) are disordered. Positions 30-44 (AAAQQQPGADDQGMA) are enriched in low complexity. Arg65 is covalently cross-linked (Cyclopeptide (Arg-Cys) (interchain with C-73 in subunit A); in form RTD-1). Arg65 participates in a covalent cross-link: Cyclopeptide (Arg-Cys) (interchain with C-73 in subunit B); in form RTD-2. A disulfide bridge connects residues Cys68 and Cys73. A Cyclopeptide (Cys-Arg) (interchain with R-65 in subunit A); in form RTD-1 cross-link involves residue Cys73. Residue Cys73 forms a Cyclopeptide (Cys-Arg) (interchain with R-65 in subunit B); in form RTD-2 linkage. Positions 74–76 (QLL) are excised as a propeptide.

The protein belongs to the alpha-defensin family. Theta subfamily. RTD-1 is a cyclic heterodimer composed of subunits A and B; disulfide-linked. RTD-2 is a cyclic homodimer composed of two subunits B; disulfide-linked. In terms of processing, forms a cyclic peptide with 1 subunit B (RTD-2) or with 1 subunit A (RTD-1). An additional intersubunit disulfide bond is formed. As to expression, RTD-1 is expressed in bone marrow. Detected in promyelocytes, myelocytes and mature neutrophils and monocytes.

Its function is as follows. RTD-1 and RTD-2 have similar antimicrobial activities against the Gram-positive bacteria S.aureus 502A and L.monocytogenes, the Gram-negative bacterium S.typhimurium, and the fungi C.albicans 16820 and C.neoformans 271A. RTD-2 is 2-3-fold less active than RTD-1 against E.coli ML35. This Macaca mulatta (Rhesus macaque) protein is Rhesus theta defensin-1/2 subunit B (RTD1B).